The chain runs to 372 residues: Mannan endo-1,4-beta-mannosidase 8 (372 aa).

Positions 57 and 172 each coordinate substrate. The Proton donor role is filled by E173. Substrate is bound at residue Y253. E293 serves as the catalytic Nucleophile. W335 lines the substrate pocket.

Belongs to the glycosyl hydrolase 5 (cellulase A) family. As to expression, expressed in stems and leaves and seeds.

It carries out the reaction Random hydrolysis of (1-&gt;4)-beta-D-mannosidic linkages in mannans, galactomannans and glucomannans.. This Oryza sativa subsp. japonica (Rice) protein is Mannan endo-1,4-beta-mannosidase 8 (MAN8).